The chain runs to 278 residues: Large ribosomal subunit protein uL2 (278 aa).

2 disordered regions span residues 32-57 (ALTE…IGGG) and 221-278 (RGVA…KKKR). The span at 269–278 (IRSRHAKKKR) shows a compositional bias: basic residues.

The protein belongs to the universal ribosomal protein uL2 family. In terms of assembly, part of the 50S ribosomal subunit. Forms a bridge to the 30S subunit in the 70S ribosome.

In terms of biological role, one of the primary rRNA binding proteins. Required for association of the 30S and 50S subunits to form the 70S ribosome, for tRNA binding and peptide bond formation. It has been suggested to have peptidyltransferase activity; this is somewhat controversial. Makes several contacts with the 16S rRNA in the 70S ribosome. This Zymomonas mobilis subsp. mobilis (strain ATCC 31821 / ZM4 / CP4) protein is Large ribosomal subunit protein uL2.